The chain runs to 118 residues: Late cornified envelope protein 1F (118 aa).

Residues 1-10 (MSCQQSQQQC) are compositionally biased toward low complexity. 2 disordered regions span residues 1–23 (MSCQ…CPPK) and 82–118 (RRRS…GGCC). Residues 11–23 (QPPPKCTPKCPPK) show a composition bias toward pro residues. Low complexity predominate over residues 95–104 (CCSQPSAGSS). Residues 105–118 (CCGGGSGQHSGGCC) show a composition bias toward gly residues.

Belongs to the LCE family. In terms of tissue distribution, skin-specific. Expression was readily detected in adult trunk skin, adult arm skin, fetal skin, penal skin, vulva, esophagus and tongue. Not expressed in the cervix, rectum, lung, colon, or placenta. Expression is observed in the fibroblasts.

Functionally, precursors of the cornified envelope of the stratum corneum. This is Late cornified envelope protein 1F (LCE1F) from Homo sapiens (Human).